We begin with the raw amino-acid sequence, 315 residues long: NAD-dependent protein lipoamidase sirtuin-4, mitochondrial (315 aa).

A mitochondrion-targeting transit peptide spans 1-29 (MRMSFGLTFKRTAKVHWRANFSQQCSLRS). In terms of domain architecture, Deacetylase sirtuin-type spans 38–315 (PPLDPEKVKE…GELLPLIDPR (278 aa)). NAD(+)-binding positions include 63 to 83 (GAGISTESGIPDYRSEKVGLY) and 144 to 147 (QNVD). H162 serves as the catalytic Proton acceptor. Zn(2+)-binding residues include C170, C173, C221, and C224. Residues 261–263 (GSS), 287–289 (NIG), and C305 each bind NAD(+).

Belongs to the sirtuin family. Class II subfamily. As to quaternary structure, interacts with GLUD1, IDE and SLC25A5. Interacts with DLAT and PDHX. Interacts with MCCC1 (via the biotin carboxylation domain). Interacts with PCCA and PC. The cofactor is Zn(2+).

The protein resides in the mitochondrion matrix. It catalyses the reaction N(6)-[(R)-lipoyl]-L-lysyl-[protein] + NAD(+) + H2O = 2''-O-lipoyl-ADP-D-ribose + nicotinamide + L-lysyl-[protein]. The catalysed reaction is N(6)-biotinyl-L-lysyl-[protein] + NAD(+) + H2O = 2''-O-biotinyl-ADP-D-ribose + nicotinamide + L-lysyl-[protein]. The enzyme catalyses N(6)-acetyl-L-lysyl-[protein] + NAD(+) + H2O = 2''-O-acetyl-ADP-D-ribose + nicotinamide + L-lysyl-[protein]. It carries out the reaction L-cysteinyl-[protein] + NAD(+) = S-(ADP-D-ribosyl)-L-cysteinyl-[protein] + nicotinamide + H(+). Functionally, acts as a NAD-dependent protein lipoamidase, biotinylase, deacetylase and ADP-ribosyl transferase. Catalyzes more efficiently removal of lipoyl- and biotinyl- than acetyl-lysine modifications. Inhibits the pyruvate dehydrogenase complex (PDH) activity via the enzymatic hydrolysis of the lipoamide cofactor from the E2 component, DLAT, in a phosphorylation-independent manner. Catalyzes the transfer of ADP-ribosyl groups onto target proteins, including mitochondrial GLUD1, inhibiting GLUD1 enzyme activity. Acts as a negative regulator of mitochondrial glutamine metabolism by mediating mono ADP-ribosylation of GLUD1: expressed in response to DNA damage and negatively regulates anaplerosis by inhibiting GLUD1, leading to block metabolism of glutamine into tricarboxylic acid cycle and promoting cell cycle arrest. In response to mTORC1 signal, SIRT4 expression is repressed, promoting anaplerosis and cell proliferation. Acts as a tumor suppressor. Also acts as a NAD-dependent protein deacetylase: mediates deacetylation of 'Lys-471' of MLYCD, inhibiting its activity, thereby acting as a regulator of lipid homeostasis. Does not seem to deacetylate PC. Controls fatty acid oxidation by inhibiting PPARA transcriptional activation. Impairs SIRT1-PPARA interaction probably through the regulation of NAD(+) levels. Down-regulates insulin secretion. The sequence is that of NAD-dependent protein lipoamidase sirtuin-4, mitochondrial from Bos taurus (Bovine).